The following is a 301-amino-acid chain: B3 domain-containing protein At5g18090 (301 aa).

A DNA-binding region (TF-B3 1) is located at residues 18–113 (FFKILRSADL…CFTVDIYQID (96 aa)). 2 disordered regions span residues 123 to 142 (SATIASSSGRNKREQRNNIY) and 153 to 194 (SWSE…KMKV). A compositionally biased stretch (basic and acidic residues) spans 133 to 142 (NKREQRNNIY). The TF-B3 2 DNA-binding region spans 209-301 (VPEFTLTIKK…PTEMLVRVSK (93 aa)).

The protein localises to the nucleus. The polypeptide is B3 domain-containing protein At5g18090 (Arabidopsis thaliana (Mouse-ear cress)).